A 61-amino-acid polypeptide reads, in one-letter code: Large ribosomal subunit protein uL30 (61 aa).

Belongs to the universal ribosomal protein uL30 family. Part of the 50S ribosomal subunit.

This Colwellia psychrerythraea (strain 34H / ATCC BAA-681) (Vibrio psychroerythus) protein is Large ribosomal subunit protein uL30.